We begin with the raw amino-acid sequence, 101 residues long: Small ribosomal subunit protein uS14 (101 aa).

This sequence belongs to the universal ribosomal protein uS14 family. Part of the 30S ribosomal subunit. Contacts proteins S3 and S10.

Its function is as follows. Binds 16S rRNA, required for the assembly of 30S particles and may also be responsible for determining the conformation of the 16S rRNA at the A site. This is Small ribosomal subunit protein uS14 from Psychrobacter arcticus (strain DSM 17307 / VKM B-2377 / 273-4).